A 589-amino-acid chain; its full sequence is Poly(3-hydroxyalkanoate) polymerase subunit PhaC (589 aa).

Positions Met-1–Pro-23 are disordered. The active site involves Cys-319.

The protein belongs to the PHA/PHB synthase family. Type I PhaC subfamily. Monomer.

The protein resides in the cytoplasm. The enzyme catalyses (3R)-3-hydroxybutanoyl-CoA + [(3R)-hydroxybutanoate](n) = [(3R)-hydroxybutanoate](n+1) + CoA. It functions in the pathway biopolymer metabolism; poly-(R)-3-hydroxybutanoate biosynthesis. Functionally, polymerizes (R)-3-hydroxybutyryl-CoA to create polyhydroxybutyrate (PHB) which consists of thousands of hydroxybutyrate molecules linked end to end. PHB serves as an intracellular energy reserve material when cells grow under conditions of nutrient limitation. The sequence is that of Poly(3-hydroxyalkanoate) polymerase subunit PhaC from Cupriavidus necator (strain ATCC 17699 / DSM 428 / KCTC 22496 / NCIMB 10442 / H16 / Stanier 337) (Ralstonia eutropha).